A 229-amino-acid polypeptide reads, in one-letter code: Putative N-acetylmannosamine-6-phosphate 2-epimerase (229 aa).

The protein belongs to the NanE family.

The enzyme catalyses an N-acyl-D-glucosamine 6-phosphate = an N-acyl-D-mannosamine 6-phosphate. Its pathway is amino-sugar metabolism; N-acetylneuraminate degradation; D-fructose 6-phosphate from N-acetylneuraminate: step 3/5. In terms of biological role, converts N-acetylmannosamine-6-phosphate (ManNAc-6-P) to N-acetylglucosamine-6-phosphate (GlcNAc-6-P). This is Putative N-acetylmannosamine-6-phosphate 2-epimerase from Escherichia coli O8 (strain IAI1).